The primary structure comprises 189 residues: ATP-dependent protease subunit HslV (189 aa).

Residue T12 is part of the active site. Na(+)-binding residues include A172, C175, and T178.

This sequence belongs to the peptidase T1B family. HslV subfamily. In terms of assembly, a double ring-shaped homohexamer of HslV is capped on each side by a ring-shaped HslU homohexamer. The assembly of the HslU/HslV complex is dependent on binding of ATP.

It is found in the cytoplasm. It carries out the reaction ATP-dependent cleavage of peptide bonds with broad specificity.. Its activity is regulated as follows. Allosterically activated by HslU binding. Its function is as follows. Protease subunit of a proteasome-like degradation complex believed to be a general protein degrading machinery. The protein is ATP-dependent protease subunit HslV of Ehrlichia ruminantium (strain Welgevonden).